The sequence spans 415 residues: Amylovoran biosynthesis protein AmsJ (415 aa).

It belongs to the polysaccharide pyruvyl transferase family.

The protein operates within glycan metabolism; exopolysaccharide biosynthesis. Its function is as follows. Involved in the biosynthesis of amylovoran which functions as a virulence factor. This Erwinia amylovora (Fire blight bacteria) protein is Amylovoran biosynthesis protein AmsJ (amsJ).